Consider the following 419-residue polypeptide: MGIPDSTTDSRHSLSSAALSSASFENIYDPARKNESTNDVIDNHTDTEIDDHDNDHENLDSNNNNENNEAFNEKAAEKKLLPWYRRYFIWILIFIVALICSVLIGVLGGVLGHRTAVRDRHPSYKAKTYSLVKEYKGTTFFDGFDFMNITDPTHGFVQYLDRNSSAKLGLISANSSNVIMAADSKHNYSSGRPSIRLQSTQYFEHGLFILDLIHLPYGCGTWPAFWTLGDDWPNGGEIDIVEGVNVGTSNQVTLHTGDGCEMEDIKRVMTGTALQTNCWVDAPNSYNAGCGVENPSGPSYGEAFNKNGGGVFVLDWRSEGIRSWFFNRSEIPSDITSGSPQPAKWSEPVADFPDTKCDIDKMFSKQKILFDLTFCGDWAGSSVYSSAGCPGSCNDFVGNNPHNFTEAYWNIKSLAVYQY.

2 disordered regions span residues 1–20 (MGIP…AALS) and 29–67 (DPAR…NNEN). Residues 30-59 (PARKNESTNDVIDNHTDTEIDDHDNDHENL) show a composition bias toward basic and acidic residues. The helical transmembrane segment at 88–108 (FIWILIFIVALICSVLIGVLG) threads the bilayer. The GH16 domain maps to 122–387 (PSYKAKTYSL…WAGSSVYSSA (266 aa)). Glutamate 237 acts as the Nucleophile in catalysis. Glutamate 242 (proton donor) is an active-site residue.

This sequence belongs to the glycosyl hydrolase 16 family.

The protein localises to the membrane. This chain is Probable glycosidase C21B10.07, found in Schizosaccharomyces pombe (strain 972 / ATCC 24843) (Fission yeast).